Here is a 335-residue protein sequence, read N- to C-terminus: Cathepsin B (335 aa).

Positions 1 to 19 (MWQLLATLSCLLVLTSARS) are cleaved as a signal peptide. Residues 20 to 79 (SLHFPPLSDEMVNYVNKQNTTWKAGHNFYNVDLSYVKKLCGAILGGPKLPQRDAFAADMV) constitute a propeptide, activation peptide. 6 cysteine pairs are disulfide-bonded: cysteine 93–cysteine 122, cysteine 105–cysteine 150, cysteine 141–cysteine 207, cysteine 142–cysteine 146, cysteine 179–cysteine 211, and cysteine 187–cysteine 198. Cysteine 108 is an active-site residue. Asparagine 192 carries an N-linked (GlcNAc...) asparagine glycan. Residue lysine 220 is modified to N6-acetyllysine. Catalysis depends on residues histidine 278 and asparagine 298. Positions 333-335 (HQH) are excised as a propeptide.

This sequence belongs to the peptidase C1 family. As to quaternary structure, dimer of a heavy chain and a light chain cross-linked by a disulfide bond. Interacts with SRPX2. Directly interacts with SHKBP1.

It is found in the lysosome. The protein localises to the melanosome. The protein resides in the secreted. It localises to the extracellular space. Its subcellular location is the apical cell membrane. The catalysed reaction is Hydrolysis of proteins with broad specificity for peptide bonds. Preferentially cleaves -Arg-Arg-|-Xaa bonds in small molecule substrates (thus differing from cathepsin L). In addition to being an endopeptidase, shows peptidyl-dipeptidase activity, liberating C-terminal dipeptides.. In terms of biological role, thiol protease which is believed to participate in intracellular degradation and turnover of proteins. Cleaves matrix extracellular phosphoglycoprotein MEPE. Involved in the solubilization of cross-linked TG/thyroglobulin in the thyroid follicle lumen. Has also been implicated in tumor invasion and metastasis. This Ovis aries (Sheep) protein is Cathepsin B (CTSB).